We begin with the raw amino-acid sequence, 201 residues long: Small ribosomal subunit protein uS4c (201 aa).

Residues 15–44 form a disordered region; the sequence is LGALPGLTNKRPRAGSDLRNQSRSGKKSQY. Positions 89-149 constitute an S4 RNA-binding domain; sequence MRLDNILFRL…DEQKSRALIQ (61 aa).

The protein belongs to the universal ribosomal protein uS4 family. As to quaternary structure, part of the 30S ribosomal subunit. Contacts protein S5. The interaction surface between S4 and S5 is involved in control of translational fidelity.

It is found in the plastid. The protein resides in the chloroplast. Functionally, one of the primary rRNA binding proteins, it binds directly to 16S rRNA where it nucleates assembly of the body of the 30S subunit. With S5 and S12 plays an important role in translational accuracy. The protein is Small ribosomal subunit protein uS4c (rps4) of Helianthus annuus (Common sunflower).